The sequence spans 484 residues: Nuclear rim protein 1 (484 aa).

Residue S3 is modified to Phosphoserine. Transmembrane regions (helical) follow at residues 145 to 165 (FTIF…MFGY) and 252 to 272 (TAIV…AIVF). Residues 416-457 (SSNENLEKGGAYLPNQDQNRPSKSLSPLRKTPLSARQKRFEG) form a disordered region. A Phosphoserine modification is found at S417. Residues 430-440 (NQDQNRPSKSL) are compositionally biased toward polar residues. The residue at position 474 (S474) is a Phosphoserine.

The protein belongs to the NUR1 family. As to quaternary structure, interacts with CSM1.

It localises to the nucleus membrane. Member of a perinuclear network that controls recombination at multiple loci to maintain genome stability. Required for rDNA repeat stability. The sequence is that of Nuclear rim protein 1 (NUR1) from Saccharomyces cerevisiae (strain ATCC 204508 / S288c) (Baker's yeast).